A 473-amino-acid polypeptide reads, in one-letter code: Phosphatidylserine synthase 2 (473 aa).

A disordered region spans residues 1 to 25 (MRRGERRVAGGSGSESPLLKGRRST). The Cytoplasmic portion of the chain corresponds to 1-40 (MRRGERRVAGGSGSESPLLKGRRSTESEVYDDGTNTFFWR). 3 positions are modified to phosphoserine: serine 12, serine 14, and serine 16. Residues 41-61 (AHTLTVLFILTCALGYVTLLE) traverse the membrane as a helical segment. Topologically, residues 62 to 74 (ETPQDTAYNTKRG) are lumenal. A helical membrane pass occupies residues 75–95 (IVASILVFLCFGVTQAKDGPF). At 96-104 (SRPHPAYWR) the chain is on the cytoplasmic side. Residues 105–125 (FWLCVSVVYELFLIFILFQTV) traverse the membrane as a helical segment. At 126–291 (QDGRQFLKYV…EWKPASSLHR (166 aa)) the chain is on the lumenal side. N-linked (GlcNAc...) asparagine glycosylation is present at asparagine 159. The helical transmembrane segment at 292–312 (WLAVCGIILVFLLAELNTFYL) threads the bilayer. A topological domain (cytoplasmic) is located at residue lysine 313. Residues 314 to 334 (FVLWMPPEHYLVLLRLVFFVN) traverse the membrane as a helical segment. Residues 335–354 (VGGVAMREIYDFMDELKPHR) are Lumenal-facing. A helical membrane pass occupies residues 355-375 (KLGQQAWLVAAITVTELLIVV). Residues 376-381 (KYDPHT) lie on the Cytoplasmic side of the membrane. A helical membrane pass occupies residues 382-402 (LTLSLPFYISQCWTLGSILVL). The Lumenal portion of the chain corresponds to 403–473 (TWTVWRFFLR…TAEEGTSAAS (71 aa)). The disordered stretch occupies residues 422–473 (RRQKQQSHQARAVNNRDGHPGPDDDLLGTGTAEEEGTTNDGVTAEEGTSAAS).

It belongs to the phosphatidyl serine synthase family. Highly expressed in testis. Detected at lower levels in kidney and heart.

The protein resides in the endoplasmic reticulum membrane. It localises to the membrane. It carries out the reaction a 1,2-diacyl-sn-glycero-3-phosphoethanolamine + L-serine = a 1,2-diacyl-sn-glycero-3-phospho-L-serine + ethanolamine. The catalysed reaction is 1-hexadecanoyl-2-(9Z-octadecenoyl)-sn-glycero-3-phosphoethanolamine + L-serine = 1-hexadecanoyl-2-(9Z-octadecenoyl)-sn-glycero-3-phospho-L-serine + ethanolamine. It catalyses the reaction 1-hexadecanoyl-2-(4Z,7Z,10Z,13Z,16Z,19Z-docosahexaenoyl)-sn-glycero-3-phosphoethanolamine + L-serine = 1-hexadecanoyl-2-(4Z,7Z,10Z,13Z,16Z,19Z-docosahexaenoyl)-sn-glycero-3-phosphoserine + ethanolamine. The enzyme catalyses 1-octadecanoyl-2-(5Z,8Z,11Z,14Z)-eicosatetraenoyl-sn-glycero-3-phosphoethanolamine + L-serine = 1-octadecanoyl-2-(5Z,8Z,11Z,14Z)-eicosatetraenoyl-sn-glycero-3-phosphoserine + ethanolamine. It carries out the reaction 1-octadecanoyl-2-(4Z,7Z,10Z,13Z,16Z,19Z-docosahexaenoyl)-sn-glycero-3-phosphoethanolamine + L-serine = 1-octadecanoyl-2-(4Z,7Z,10Z,13Z,16Z,19Z-docosahexaenoyl)-sn-glycero-3-phosphoserine + ethanolamine. The catalysed reaction is 1-(1Z-octadecenyl)-2-(4Z,7Z,10Z,13Z,16Z,19Z-docosahexaenoyl)-sn-glycero-3-phosphoethanolamine + L-serine = 1-(1Z-octadecenyl)-2-(4Z,7Z,10Z,13Z,16Z,19Z-docosahexaenoyl)-sn-glycero-3-phospho-L-serine + ethanolamine. It catalyses the reaction 1-octadecanoyl-2-(9Z-octadecenoyl)-sn-glycero-3-phosphoethanolamine + L-serine = 1-octadecanoyl-2-(9Z-octadecenoyl)-sn-glycero-3-phospho-L-serine + ethanolamine. The enzyme catalyses 1-(1Z-octadecenyl)-2-(9Z-octadecenoyl)-sn-glycero-3-phosphoethanolamine + L-serine = 1-(1Z-octadecenyl)-2-(9Z-octadecenoyl)-sn-glycero-3-phospho-L-serine + ethanolamine. It carries out the reaction 1-(1Z-octadecenyl)-2-(5Z,8Z,11Z,14Z- eicosatetraenoyl)-sn-glycero-3-phosphoethanolamine + L-serine = 1-(1Z-octadecenyl)-2-(5Z,8Z,11Z,14Z-eicosatetraenoyl)-sn-glycero-3-phospho-L-serine + ethanolamine. The protein operates within phospholipid metabolism; phosphatidylserine biosynthesis. With respect to regulation, almost complete inhibition by ethanolamine in both the mitochondria-associated membrane (MAM) and endoplasmic reticulum (ER) per se. Catalyzes a base-exchange reaction in which the polar head group of phosphatidylethanolamine (PE) or phosphatidylcholine (PC) is replaced by L-serine. Catalyzes the conversion of phosphatatidylethanolamine and does not act on phosphatidylcholine. Can utilize both phosphatidylethanolamine (PE) plasmalogen and diacyl PE as substrate and the latter is six times better utilized, indicating the importance of an ester linkage at the sn-1 position. Although it shows no sn-1 fatty acyl preference, exhibits significant preference towards docosahexaenoic acid (22:6n-3) compared with 18:1 or 20:4 at the sn-2 position. The sequence is that of Phosphatidylserine synthase 2 (Ptdss2) from Mus musculus (Mouse).